A 500-amino-acid polypeptide reads, in one-letter code: NAD(P)H-quinone oxidoreductase chain 4, chloroplastic (500 aa).

The next 14 membrane-spanning stretches (helical) occupy residues 4 to 24, 37 to 57, 87 to 107, 113 to 130, 134 to 154, 167 to 187, 211 to 231, 242 to 262, 274 to 294, 313 to 333, 334 to 354, 386 to 406, 417 to 437, and 462 to 482; these read FPWL…IFFL, ISIC…HFQL, LGSI…AWPI, LFYF…GLFS, LLLF…LLSM, FILY…GMGL, ILLY…IPLH, HYST…YGLI, YLFS…AALT, MGFI…GAIL, QILS…TASD, LALP…GLIT, LITF…LSML, and LFIL…PDFV.

This sequence belongs to the complex I subunit 4 family.

It is found in the plastid. The protein localises to the chloroplast thylakoid membrane. It catalyses the reaction a plastoquinone + NADH + (n+1) H(+)(in) = a plastoquinol + NAD(+) + n H(+)(out). The enzyme catalyses a plastoquinone + NADPH + (n+1) H(+)(in) = a plastoquinol + NADP(+) + n H(+)(out). The polypeptide is NAD(P)H-quinone oxidoreductase chain 4, chloroplastic (ndhD) (Hordeum vulgare (Barley)).